The sequence spans 523 residues: UvrABC system protein C (523 aa).

The 79-residue stretch at 15–93 folds into the GIY-YIG domain; it reads HLPGCYLFKD…IKKHWPRYNI (79 aa). Residues 197–232 enclose the UVR domain; the sequence is RELIESMETEMKEMAAKQMFEQAMELRDEIAALEYL.

Belongs to the UvrC family. In terms of assembly, interacts with UvrB in an incision complex.

Its subcellular location is the cytoplasm. Its function is as follows. The UvrABC repair system catalyzes the recognition and processing of DNA lesions. UvrC both incises the 5' and 3' sides of the lesion. The N-terminal half is responsible for the 3' incision and the C-terminal half is responsible for the 5' incision. This is UvrABC system protein C from Methanosarcina mazei (strain ATCC BAA-159 / DSM 3647 / Goe1 / Go1 / JCM 11833 / OCM 88) (Methanosarcina frisia).